The following is a 310-amino-acid chain: Tyrosine recombinase XerC (310 aa).

The Core-binding (CB) domain occupies 11–97; it reads NSLQKPLSRF…SLRSFFDFLV (87 aa). The Tyr recombinase domain occupies 118-298; it reads PLPKNLDVDE…DFQHLAQAYD (181 aa). Active-site residues include Arg-157, Lys-181, His-250, Arg-253, and His-276. The active-site O-(3'-phospho-DNA)-tyrosine intermediate is Tyr-285.

This sequence belongs to the 'phage' integrase family. XerC subfamily. As to quaternary structure, forms a cyclic heterotetrameric complex composed of two molecules of XerC and two molecules of XerD.

It localises to the cytoplasm. In terms of biological role, site-specific tyrosine recombinase, which acts by catalyzing the cutting and rejoining of the recombining DNA molecules. The XerC-XerD complex is essential to convert dimers of the bacterial chromosome into monomers to permit their segregation at cell division. It also contributes to the segregational stability of plasmids. The protein is Tyrosine recombinase XerC of Vibrio atlanticus (strain LGP32) (Vibrio splendidus (strain Mel32)).